The following is a 967-amino-acid chain: Leucine--tRNA ligase (967 aa).

Positions 43–53 match the 'HIGH' region motif; it reads PYLSGHLHVGH. A 'KMSKS' region motif is present at residues 650–654; the sequence is KMSKS. Lys653 lines the ATP pocket.

It belongs to the class-I aminoacyl-tRNA synthetase family.

It is found in the cytoplasm. It catalyses the reaction tRNA(Leu) + L-leucine + ATP = L-leucyl-tRNA(Leu) + AMP + diphosphate. The protein is Leucine--tRNA ligase of Pyrococcus abyssi (strain GE5 / Orsay).